The following is a 355-amino-acid chain: Protein RecA (355 aa).

Position 67-74 (67-74 (GPESSGKT)) interacts with ATP.

Belongs to the RecA family.

The protein localises to the cytoplasm. In terms of biological role, can catalyze the hydrolysis of ATP in the presence of single-stranded DNA, the ATP-dependent uptake of single-stranded DNA by duplex DNA, and the ATP-dependent hybridization of homologous single-stranded DNAs. It interacts with LexA causing its activation and leading to its autocatalytic cleavage. The protein is Protein RecA of Proteus mirabilis (strain HI4320).